The primary structure comprises 1242 residues: Protein jagged-1a (1242 aa).

The signal sequence occupies residues Met1–Ala28. At Ser29 to Tyr1070 the chain is on the extracellular side. An N-linked (GlcNAc...) asparagine glycan is attached at Asn141. Residues Val186–Cys230 enclose the DSL domain. Cystine bridges form between Cys188–Cys197 and Cys201–Cys213. The N-linked (GlcNAc...) asparagine glycan is linked to Asn218. Intrachain disulfides connect Cys221-Cys230, Cys235-Cys246, Cys239-Cys252, Cys254-Cys263, Cys266-Cys277, Cys272-Cys283, Cys285-Cys294, Cys301-Cys313, Cys307-Cys323, Cys325-Cys334, Cys341-Cys352, Cys346-Cys361, Cys363-Cys372, Cys379-Cys390, Cys384-Cys399, Cys401-Cys410, Cys417-Cys428, Cys422-Cys437, Cys439-Cys448, Cys455-Cys465, Cys459-Cys474, Cys476-Cys485, Cys492-Cys503, Cys497-Cys512, Cys514-Cys523, Cys530-Cys541, Cys535-Cys550, Cys552-Cys561, Cys600-Cys618, Cys620-Cys629, Cys636-Cys647, Cys641-Cys656, Cys658-Cys667, Cys674-Cys685, Cys679-Cys694, Cys696-Cys705, Cys712-Cys723, Cys717-Cys732, and Cys734-Cys743. Residues Asn231–Asp264 form the EGF-like 1 domain. Positions Gln265 to Asp295 constitute an EGF-like 2; atypical domain. EGF-like domains lie at Asp297–Glu335 and Ala337–Asn373. The region spanning Asn375–Leu411 is the EGF-like 5; calcium-binding domain. Residue Asn385 is glycosylated (N-linked (GlcNAc...) asparagine). The EGF-like 6; calcium-binding domain occupies Asp413 to Asp449. One can recognise an EGF-like 7; calcium-binding domain in the interval Asn451 to Glu486. The EGF-like 8; calcium-binding domain occupies Asp488 to Gln524. 2 consecutive EGF-like domains span residues Asp526–Ser562 and Val575–His630. N-linked (GlcNAc...) asparagine glycosylation occurs at Asn560. The region spanning Asn632 to Glu668 is the EGF-like 11; calcium-binding domain. An EGF-like 12; calcium-binding domain is found at Asn670 to His706. EGF-like domains follow at residues Arg708–Asn744 and Lys747–Ser783. An N-linked (GlcNAc...) asparagine glycan is attached at Asn748. Disulfide bonds link Cys751–Cys762, Cys756–Cys771, Cys773–Cys782, Cys789–Cys800, Cys794–Cys809, Cys811–Cys820, Cys827–Cys838, Cys832–Cys847, and Cys849–Cys858. An EGF-like 15; calcium-binding domain is found at Asn785 to Arg821. Residues Asn823–Gln859 enclose the EGF-like 16; calcium-binding domain. Residues Thr917–Ala959 enclose the EGF-like 17 domain. N-linked (GlcNAc...) asparagine glycosylation is found at Asn960, Asn991, and Asn1046. Residues Met1071–Ile1095 traverse the membrane as a helical segment. Over Arg1096–Val1242 the chain is Cytoplasmic. Positions Arg1191–Val1242 are disordered. The span at Asn1210–Gln1232 shows a compositional bias: basic and acidic residues.

The protein resides in the membrane. It localises to the cell membrane. Ligand for multiple Notch receptors and involved in the mediation of Notch signaling. Seems to be involved in cell-fate decisions. This Danio rerio (Zebrafish) protein is Protein jagged-1a (jag1a).